The primary structure comprises 579 residues: MAAKSDGAAASASPDPEGAAGGARGSAGGRGEAAAAAGPPGVVGAGGPGPRYELRDCCWVLCALLVFFSDGATDLWLAASYYLQNQHTYFSLTLLFVLLPSLVVQLLSFRWFVYDYSEPAGSPGPAVSTKDSVAGGAAISTKDSAGAFRTKEGSPEPGPQPAPSSASAYRRRCCRLCIWLLQTLVHLLQLGQVWRYLRALYLGLQSRWRGERLRRHFYWQMLFESADVSMLRLLETFLRSAPQLVLQLSLLVHRGGAPDLLPALSTSASLVSLAWTLASYQKVLRDSRDDKRPLSYKGAVAQVLWHLFSIAARGLAFALFASVYKLYFGIFIVAHWCVMTFWVIQGETDFCMSKWEEIIYNMVVGIIYIFCWFNVKEGRSRRRMTLYHCIVLLENAALTGFWYSSRNFSTDFYSLIMVCVVASSFALGIFFMCVYYCLLHPNGPMLGPQAPGCIFRKASEPCGPPADAITSPPRSLPRTTGAERDGASAGERAGTPTPPVFQVRPGLPPTPVARTLRTEGPVIRIDLPRKKYPAWDAHFIDRRLRKTILALEYSSPATPRLQYRSVGTSQELLEYETTV.

Residues 1-18 are compositionally biased toward low complexity; that stretch reads MAAKSDGAAASASPDPEG. Residues 1–40 are disordered; it reads MAAKSDGAAASASPDPEGAAGGARGSAGGRGEAAAAAGPP. Residues 19–31 show a composition bias toward gly residues; it reads AAGGARGSAGGRG. The next 2 helical transmembrane spans lie at 59-79 and 89-109; these read WVLC…WLAA and YFSL…LLSF. A disordered region spans residues 146–165; the sequence is GAFRTKEGSPEPGPQPAPSS. The next 5 helical transmembrane spans lie at 260–280, 314–334, 355–375, 384–404, and 415–435; these read LLPA…LASY, GLAF…FIVA, WEEI…WFNV, MTLY…FWYS, and LIMV…MCVY. Residues 466–510 form a disordered region; sequence ADAITSPPRSLPRTTGAERDGASAGERAGTPTPPVFQVRPGLPPT.

This sequence belongs to the XK family.

It is found in the cell membrane. This Homo sapiens (Human) protein is XK-related protein 7.